Reading from the N-terminus, the 207-residue chain is Holliday junction branch migration complex subunit RuvA (207 aa).

Residues 1 to 63 form a domain I region; it reads MISSLRGTVL…EDSLQLFGFS (63 aa). Residues 64–142 are domain II; that stretch reads GLEQLQVFEL…ACRRPSAPSA (79 aa). Positions 142–146 are flexible linker; the sequence is ARRPS. Residues 147–207 form a domain III region; the sequence is APSSVSDSVL…RLGPANQAAR (61 aa).

It belongs to the RuvA family. Homotetramer. Forms an RuvA(8)-RuvB(12)-Holliday junction (HJ) complex. HJ DNA is sandwiched between 2 RuvA tetramers; dsDNA enters through RuvA and exits via RuvB. An RuvB hexamer assembles on each DNA strand where it exits the tetramer. Each RuvB hexamer is contacted by two RuvA subunits (via domain III) on 2 adjacent RuvB subunits; this complex drives branch migration. In the full resolvosome a probable DNA-RuvA(4)-RuvB(12)-RuvC(2) complex forms which resolves the HJ.

It localises to the cytoplasm. The RuvA-RuvB-RuvC complex processes Holliday junction (HJ) DNA during genetic recombination and DNA repair, while the RuvA-RuvB complex plays an important role in the rescue of blocked DNA replication forks via replication fork reversal (RFR). RuvA specifically binds to HJ cruciform DNA, conferring on it an open structure. The RuvB hexamer acts as an ATP-dependent pump, pulling dsDNA into and through the RuvAB complex. HJ branch migration allows RuvC to scan DNA until it finds its consensus sequence, where it cleaves and resolves the cruciform DNA. This Leifsonia xyli subsp. xyli (strain CTCB07) protein is Holliday junction branch migration complex subunit RuvA.